The following is an 850-amino-acid chain: Pentatricopeptide repeat-containing protein At3g49170, chloroplastic (850 aa).

A chloroplast-targeting transit peptide spans 1 to 50; that stretch reads MAMISFSFPSPAKLPIKSQPSVSNRINVADRLILRHLNAGDLRGAVSALD. 17 PPR repeats span residues 61–95, 96–130, 131–164, 165–199, 201–232, 233–267, 268–302, 303–334, 335–370, 372–406, 407–437, 438–472, 473–507, 508–538, 539–573, 574–609, and 610–640; these read DSVT…DIEP, DSVL…GKRD, VVSW…GLVP, NDYC…GHFE, DVCV…MSEL, NVVT…GFES, DKFT…GLVD, DVEC…MEDH, SVMS…GHVE, NHFT…GLAS, NSSV…LSEK, NLVS…ELGV, SAFT…GLSC, NQPV…MENR, NVIS…GVKP, NEVT…KIKP, and KMEH…MPFQ. Residues 645-720 are type E motif; it reads VWRTFLGACR…EGGCSWIEVG (76 aa). The tract at residues 721–751 is type E(+) motif; sequence DKIHKFYVGDTAHPNAHQIYDELDRLITEIK. The tract at residues 752–850 is type DYW motif; that stretch reads RCGYVPDTDL…DGKCSCNDYW (99 aa).

Belongs to the PPR family. PCMP-H subfamily.

Its subcellular location is the plastid. The protein localises to the chloroplast. Its function is as follows. May play a role in embryogenesis. The sequence is that of Pentatricopeptide repeat-containing protein At3g49170, chloroplastic (EMB2261) from Arabidopsis thaliana (Mouse-ear cress).